Reading from the N-terminus, the 527-residue chain is Secologanin synthase 2 (527 aa).

Topologically, residues 1 to 11 (MEMDMDIIRKA) are lumenal. The helical transmembrane segment at 12-32 (IAATIFALVMAWAWRVLDWAW) threads the bilayer. The Cytoplasmic portion of the chain corresponds to 33–527 (FTPKRIEKRL…IYKKLERQNF (495 aa)). Position 470 (C470) interacts with heme.

It belongs to the cytochrome P450 family. The cofactor is heme. Expressed in leaves (especially in leaf epidermis), and, to a lower extent, in roots, stems, flower buds and flowers.

Its subcellular location is the endoplasmic reticulum membrane. It catalyses the reaction loganin + reduced [NADPH--hemoprotein reductase] + O2 = secologanin + oxidized [NADPH--hemoprotein reductase] + 2 H2O + H(+). It carries out the reaction secologanin + reduced [NADPH--hemoprotein reductase] + O2 = secoxyloganin + oxidized [NADPH--hemoprotein reductase] + H2O + 2 H(+). The protein operates within alkaloid biosynthesis. In terms of biological role, component of the seco-iridoid and derivatives monoterpenoid indole alkaloids (MIAs, e.g. secologanin) biosynthesis pathway. Catalyzes the conversion of loganin into secologanin. Catalyzes the conversion of secologanin into secoxyloganin. The chain is Secologanin synthase 2 from Catharanthus roseus (Madagascar periwinkle).